Here is a 785-residue protein sequence, read N- to C-terminus: Phenylalanine--tRNA ligase beta subunit (785 aa).

The region spanning 39–147 is the tRNA-binding domain; sequence FPIPRGVVFA…DALPPGTPLS (109 aa). The region spanning 399–474 is the B5 domain; sequence KPPEAIPFRP…RIQGYETIPL (76 aa). Mg(2+)-binding residues include D452, D458, E461, and E462. The FDX-ACB domain maps to 688–780; that stretch reads SRHPAAFRDL…ALRARGFGLR (93 aa).

It belongs to the phenylalanyl-tRNA synthetase beta subunit family. Type 1 subfamily. Tetramer of two alpha and two beta subunits. Mg(2+) serves as cofactor.

Its subcellular location is the cytoplasm. The catalysed reaction is tRNA(Phe) + L-phenylalanine + ATP = L-phenylalanyl-tRNA(Phe) + AMP + diphosphate + H(+). In Thermus thermophilus (strain ATCC 27634 / DSM 579 / HB8), this protein is Phenylalanine--tRNA ligase beta subunit (pheT).